The chain runs to 436 residues: Acetyl-CoA decarbonylase/synthase complex subunit delta 2 (436 aa).

This sequence belongs to the CdhD family. In terms of assembly, heterodimer of delta and gamma chains. The ACDS complex is made up of alpha, epsilon, beta, gamma and delta chains with a probable stoichiometry of (alpha(2)epsilon(2))(4)-beta(8)-(gamma(1)delta(1))(8) (Potential).

It functions in the pathway one-carbon metabolism; methanogenesis from acetate. In terms of biological role, part of a complex that catalyzes the reversible cleavage of acetyl-CoA, allowing growth on acetate as sole source of carbon and energy. Probably maintains the overall quaternary structure of the ACDS complex. The polypeptide is Acetyl-CoA decarbonylase/synthase complex subunit delta 2 (cdhD2) (Methanosarcina acetivorans (strain ATCC 35395 / DSM 2834 / JCM 12185 / C2A)).